Consider the following 436-residue polypeptide: MAPPKKTVKKMDLTSFLNDDTFGSSWAEEDVDLNKITIPIETANANTIPLSELAHAKNNSNNTRSGGFGGSFGGRSRLDPALGGGSSDRREEYPVPDAPPYRAVINNIPWDITPEGVQAWVEDGLVKPEAVEEVVLPKNLRDPTRLKGNAFVTLKERADLVAVLKFNGTKLNERTVYVSVAAPRRGGGADVDWSSARGSNFQGDGREDAPDLDWGAARGSNFRGPRREREEVDIDWTAARGSNFQGSSRPPRREREEVDIDWSAARGSNFQGSSRPPRREREEPDIDWSAARGSNFQSSSRPPRREREEPDIDWSAARGSNFQSSSRPPRREREKEEPALDWGAARGAQFGKPQQTKNTYKDRSLTNKKTTDEQPKIQKSVYDVLRTEDDDEDEEAEKQNGDAKENKVDAAVEKLQDKTAQLTVEDGDNWEVVGKK.

The disordered stretch occupies residues 56–98 (AKNNSNNTRSGGFGGSFGGRSRLDPALGGGSSDRREEYPVPDA). Residues serine 65 and serine 71 each carry the phosphoserine modification. Residues 101–183 (YRAVINNIPW…RTVYVSVAAP (83 aa)) form the RRM domain. The segment at 185–406 (RGGGADVDWS…EKQNGDAKEN (222 aa)) is disordered. A 1; approximate repeat occupies 190–210 (DVDWSSARGSNFQGDGREDAP). The tract at residues 190 to 350 (DVDWSSARGS…DWGAARGAQF (161 aa)) is 7 X approximate tandem repeats. Repeat copies occupy residues 211-232 (DLDWGAARGSNFRGPRREREEV), 233-258 (DIDWTAARGSNFQGSSRPPRREREEV), 259-284 (DIDWSAARGSNFQGSSRPPRREREEP), 285-310 (DIDWSAARGSNFQSSSRPPRREREEP), and 311-340 (DIDWSAARGSNFQSSSRPPRREREKEEPAL). Basic and acidic residues predominate over residues 329–338 (PRREREKEEP). The stretch at 341-350 (DWGAARGAQF) is one 7; truncated repeat. Composition is skewed to basic and acidic residues over residues 359 to 376 (TYKDRSLTNKKTTDEQPK) and 397 to 406 (EKQNGDAKEN).

Its function is as follows. Involved in translation initiation. May be the homolog of mammalian eIF4B and be part of an RNA helicase. STM1/TIF3 is a non-essential gene. This chain is Eukaryotic translation initiation factor 4B (TIF3), found in Saccharomyces cerevisiae (strain ATCC 204508 / S288c) (Baker's yeast).